A 219-amino-acid polypeptide reads, in one-letter code: Ras-related protein Rab-3B (219 aa).

N-acetylalanine is present on A2. GTP contacts are provided by S31, S32, V33, G34, K35, T36, S37, P49, and S53. S32 contributes to the GDP binding site. G34, K35, T36, and S37 together coordinate GDP. T36 is a Mg(2+) binding site. Positions D45 to D58 match the Switch 1 motif. T54 and D77 together coordinate Mg(2+). Positions T78 to M96 match the Switch 2 motif. G80 contributes to the GTP binding site. At T86 the chain carries Phosphothreonine; by LRRK2. Residues N135, K136, and D138 each contribute to the GTP site. GDP-binding residues include N135, K136, D138, M139, A166, and K167. Positions 166 and 167 each coordinate GTP. Residues S188 and S190 each carry the phosphoserine modification. Residues C217 and C219 are each lipidated (S-geranylgeranyl cysteine). Position 219 is a cysteine methyl ester (C219).

The protein belongs to the small GTPase superfamily. Rab family. Interacts with RIMS1, RIMS2, RPH3A and RPH3AL. The GTP-bound form interacts with GAS8/DRC4 (via coiled-coil domains). The GTP-bound form interacts with REP15. Interacts with GDI2, CHM and CHML; phosphorylation at Thr-86 disrupts these interactions. Interacts with MADD (via uDENN domain); the GTP-bound form is preferred for interaction. Requires Mg(2+) as cofactor. Post-translationally, phosphorylation of Thr-86 in the switch II region by LRRK2 prevents the association of RAB regulatory proteins, including CHM, CHML and RAB GDP dissociation inhibitor GDI2.

The protein localises to the cell membrane. The protein resides in the golgi apparatus. It carries out the reaction GTP + H2O = GDP + phosphate + H(+). Its activity is regulated as follows. Regulated by guanine nucleotide exchange factors (GEFs) which promote the exchange of bound GDP for free GTP. Regulated by GTPase activating proteins (GAPs) which increase the GTP hydrolysis activity. Inhibited by GDP dissociation inhibitors (GDIs) which prevent Rab-GDP dissociation. The small GTPases Rab are key regulators of intracellular membrane trafficking, from the formation of transport vesicles to their fusion with membranes. Rabs cycle between an inactive GDP-bound form and an active GTP-bound form that is able to recruit to membranes different sets of downstream effectors directly responsible for vesicle formation, movement, tethering and fusion. In Homo sapiens (Human), this protein is Ras-related protein Rab-3B.